The primary structure comprises 358 residues: COP9 signalosome complex subunit 5b (358 aa).

Position 1 is an N-acetylmethionine (Met1). The region spanning 59 to 196 (VKISALALLK…IGAFRTYSKG (138 aa)) is the MPN domain. Zn(2+)-binding residues include His142, His144, and Asp155. Positions 142-155 (HSHPGYGCWLSGID) match the JAMM motif motif. Polar residues predominate over residues 338-349 (MRQSNNKSPTDS). The disordered stretch occupies residues 338–358 (MRQSNNKSPTDSSDPDPMITY).

Belongs to the peptidase M67A family. CSN5 subfamily. Component of the CSN complex, probably composed of CSN1, CSN2, CSN3, CSN4, CSN5 (CSN5A or CSN5B), CSN6 (CSN6A or CSN6B), CSN7 and CSN8. CSN5A or CSN5B are present within distinct CSN complexes each containing only one copy of CSN5. Interacts with itself. In the complex, it is located in the center and probably interacts directly with CSN4 and CSN6A or CSN6B. Also exists as monomeric form. Interacts with CYT1 in vitro and in planta. Interacts with FLZ3. Requires a divalent metal cation as cofactor. As to expression, ubiquitously expressed. Highly expressed in flowers and roots. Expressed at lower level in seedlings and siliques.

Its subcellular location is the cytoplasm. It localises to the nucleus. In terms of biological role, probable protease subunit of the COP9 signalosome complex (CSN), a complex involved in various cellular and developmental processes such as photomorphogenesis and auxin and jasmonate responses. The CSN complex is an essential regulator of the ubiquitin (Ubl) conjugation pathway by mediating the deneddylation of the cullin subunits of the SCF-type E3 ligase complexes, leading to decrease the Ubl ligase activity of SCF. In the complex, it probably acts as the catalytic center that mediates the cleavage of Nedd8 from cullins. It however has no metalloprotease activity by itself and requires the other subunits of the CSN complex. The CSN complex is involved in repression of photomorphogenesis in darkness by regulating the activity of COP1-containing Ubl ligase complexes. The complex is also required for degradation of PSIAA6 by regulating the activity of the Ubl ligase SCF-TIR complex. Not involved in CSN's deneddylation/derubylation activity. Essential for the structural integrity of the CSN holocomplex. In Arabidopsis thaliana (Mouse-ear cress), this protein is COP9 signalosome complex subunit 5b.